A 334-amino-acid polypeptide reads, in one-letter code: Nucleoid-associated protein PFL_1060 (334 aa).

Belongs to the YejK family.

Its subcellular location is the cytoplasm. The protein localises to the nucleoid. The chain is Nucleoid-associated protein PFL_1060 from Pseudomonas fluorescens (strain ATCC BAA-477 / NRRL B-23932 / Pf-5).